A 425-amino-acid chain; its full sequence is NAC transcription factor ONAC010 (425 aa).

The segment covering 1–10 (MESPDSSSGS) has biased composition (polar residues). The tract at residues 1–34 (MESPDSSSGSAPPRVLRRQQQQPGSAPELPPGFR) is disordered. Over residues 12-23 (PPRVLRRQQQQP) the composition is skewed to low complexity. Residues 29–200 (LPPGFRFHPT…DWVLCRIYKK (172 aa)) form the NAC domain. A DNA-binding region spans residues 129–206 (VGVKKALVFY…IYKKTNKAGA (78 aa)).

Its subcellular location is the nucleus. Functionally, transcription factor of the NAC family associated with male fertility. In Oryza sativa subsp. indica (Rice), this protein is NAC transcription factor ONAC010 (ONAC010).